A 692-amino-acid polypeptide reads, in one-letter code: Putative ESX-1 scaffolding and assembly protein SaeA (692 aa).

Residues 1 to 21 (MGERGELVSDLHPSDDHDADP) show a composition bias toward basic and acidic residues. Disordered stretches follow at residues 1-23 (MGER…DPRL) and 87-134 (PAAP…TTGF). The segment covering 89–107 (APEPDPPPVPEPQPEPEPG) has biased composition (pro residues).

It is found in the cytoplasm. Its function is as follows. May be involved in assembly of the ESX-1 / type VII specialized secretion system (T7SS), which exports several proteins including EsxA and EsxB. Involved in DNA conjugation in recipient (MKD8) but not donor (mc(2)155) strain. This Mycolicibacterium smegmatis (strain ATCC 700084 / mc(2)155) (Mycobacterium smegmatis) protein is Putative ESX-1 scaffolding and assembly protein SaeA.